The chain runs to 460 residues: Chromosomal replication initiator protein DnaA (460 aa).

The domain I, interacts with DnaA modulators stretch occupies residues 1–84 (MAVSLWQQCI…RFDIGSRPSA (84 aa)). Residues 84–123 (AKKPEPAPVAAVRVPNPQTKASVGTSFNTTEPVANTNHRS) are domain II. The tract at residues 103–123 (KASVGTSFNTTEPVANTNHRS) is disordered. A domain III, AAA+ region region spans residues 124 to 340 (NINPTYQFDN…GALNRVIANA (217 aa)). Residues Gly-168, Gly-170, Lys-171, and Thr-172 each coordinate ATP. A domain IV, binds dsDNA region spans residues 341–460 (NFTGRPITID…YANLIRTLSS (120 aa)).

Belongs to the DnaA family. As to quaternary structure, oligomerizes as a right-handed, spiral filament on DNA at oriC.

The protein resides in the cytoplasm. In terms of biological role, plays an essential role in the initiation and regulation of chromosomal replication. ATP-DnaA binds to the origin of replication (oriC) to initiate formation of the DNA replication initiation complex once per cell cycle. Binds the DnaA box (a 9 base pair repeat at the origin) and separates the double-stranded (ds)DNA. Forms a right-handed helical filament on oriC DNA; dsDNA binds to the exterior of the filament while single-stranded (ss)DNA is stabiized in the filament's interior. The ATP-DnaA-oriC complex binds and stabilizes one strand of the AT-rich DNA unwinding element (DUE), permitting loading of DNA polymerase. After initiation quickly degrades to an ADP-DnaA complex that is not apt for DNA replication. Binds acidic phospholipids. This is Chromosomal replication initiator protein DnaA from Shewanella sp. (strain MR-4).